Here is a 284-residue protein sequence, read N- to C-terminus: Pantothenate synthetase (284 aa).

30 to 37 lines the ATP pocket; that stretch reads MGNLHDGH. Histidine 37 serves as the catalytic Proton donor. (R)-pantoate is bound at residue glutamine 61. Glutamine 61 is a beta-alanine binding site. 149–152 contributes to the ATP binding site; that stretch reads GEKD. Glutamine 155 provides a ligand contact to (R)-pantoate. ATP-binding positions include valine 178 and 186 to 189; that span reads LSSR.

It belongs to the pantothenate synthetase family. In terms of assembly, homodimer.

Its subcellular location is the cytoplasm. It catalyses the reaction (R)-pantoate + beta-alanine + ATP = (R)-pantothenate + AMP + diphosphate + H(+). The protein operates within cofactor biosynthesis; (R)-pantothenate biosynthesis; (R)-pantothenate from (R)-pantoate and beta-alanine: step 1/1. In terms of biological role, catalyzes the condensation of pantoate with beta-alanine in an ATP-dependent reaction via a pantoyl-adenylate intermediate. This chain is Pantothenate synthetase, found in Photorhabdus laumondii subsp. laumondii (strain DSM 15139 / CIP 105565 / TT01) (Photorhabdus luminescens subsp. laumondii).